We begin with the raw amino-acid sequence, 207 residues long: Adenylyl-sulfate kinase (207 aa).

34 to 41 (GLSGSGKS) contacts ATP. The Phosphoserine intermediate role is filled by S108.

The protein belongs to the APS kinase family.

The catalysed reaction is adenosine 5'-phosphosulfate + ATP = 3'-phosphoadenylyl sulfate + ADP + H(+). The protein operates within sulfur metabolism; hydrogen sulfide biosynthesis; sulfite from sulfate: step 2/3. In terms of biological role, catalyzes the synthesis of activated sulfate. The protein is Adenylyl-sulfate kinase of Lactiplantibacillus plantarum (strain ATCC BAA-793 / NCIMB 8826 / WCFS1) (Lactobacillus plantarum).